A 500-amino-acid polypeptide reads, in one-letter code: NAD(P)H-quinone oxidoreductase chain 4, chloroplastic (500 aa).

Transmembrane regions (helical) follow at residues 4 to 24 (FPWL…IFFF), 35 to 55 (YTIC…CYHF), 87 to 107 (IGPV…AWPV), 113 to 130 (LFHF…GSFS), 134 to 154 (LLLF…LLSM), 167 to 187 (FILY…GMGL), 208 to 228 (ALEI…LPII), 242 to 262 (HYST…YGLV), 272 to 292 (AHSI…IYAA), 305 to 325 (IAYS…SITD), 330 to 350 (GAIL…FLAG), 386 to 406 (LALP…GIIT), 416 to 436 (ILIT…SLSM), and 463 to 483 (FVSI…DFVF).

The protein belongs to the complex I subunit 4 family.

It localises to the plastid. The protein localises to the chloroplast thylakoid membrane. It carries out the reaction a plastoquinone + NADH + (n+1) H(+)(in) = a plastoquinol + NAD(+) + n H(+)(out). The enzyme catalyses a plastoquinone + NADPH + (n+1) H(+)(in) = a plastoquinol + NADP(+) + n H(+)(out). The sequence is that of NAD(P)H-quinone oxidoreductase chain 4, chloroplastic from Nandina domestica (Heavenly bamboo).